The following is a 113-amino-acid chain: uncharacterized protein (113 aa).

The SWIM-type zinc-finger motif lies at 49–91; sequence FFVVVGKEEYVVEGGFCTCPDFLVNLKGKSPCAHIIAVEVAKI.

This is an uncharacterized protein from Archaeoglobus fulgidus (strain ATCC 49558 / DSM 4304 / JCM 9628 / NBRC 100126 / VC-16).